A 436-amino-acid polypeptide reads, in one-letter code: Enolase 1 (436 aa).

Residue Ser-40 coordinates Mg(2+). An intrachain disulfide couples Cys-147 to Cys-169. The (2R)-2-phosphoglycerate site is built by Gln-164 and Glu-208. Residue Glu-208 is the Proton donor of the active site. Residues Asp-243, Glu-296, and Asp-322 each contribute to the Mg(2+) site. Asp-322 is a (2R)-2-phosphoglycerate binding site. The active-site Proton acceptor is the Lys-347. 2 residues coordinate (2R)-2-phosphoglycerate: Arg-376 and Ser-377.

This sequence belongs to the enolase family. In terms of assembly, homodimer. Homotetramer. Interacts with methyltransferase METH; the interaction inhibits METH catalytic activity; 2-phosphoglycerate binding to ENO prevents the interaction with METH. The cofactor is Mg(2+).

Its subcellular location is the cytoplasm. It is found in the nucleus. The enzyme catalyses (2R)-2-phosphoglycerate = phosphoenolpyruvate + H2O. It functions in the pathway carbohydrate degradation; glycolysis; pyruvate from D-glyceraldehyde 3-phosphate: step 4/5. In terms of biological role, glycolytic enzyme that catalyzes the conversion of 2-phosphoglycerate to phosphoenolpyruvate. Inhibits tRNA methyltransferase METH catalytic activity in the absence of 2-phosphoglycerate. This chain is Enolase 1, found in Entamoeba histolytica (strain ATCC 30459 / HM-1:IMSS / ABRM).